Here is a 227-residue protein sequence, read N- to C-terminus: PKHD-type hydroxylase A1S_0473 (227 aa).

A Fe2OG dioxygenase domain is found at 78–178 (KIIPPLFNRY…RFASFFWVQS (101 aa)). 3 residues coordinate Fe cation: His-96, Asp-98, and His-159. Arg-169 is a binding site for 2-oxoglutarate.

Fe(2+) is required as a cofactor. The cofactor is L-ascorbate.

This chain is PKHD-type hydroxylase A1S_0473, found in Acinetobacter baumannii (strain ATCC 17978 / DSM 105126 / CIP 53.77 / LMG 1025 / NCDC KC755 / 5377).